The sequence spans 241 residues: Uridylate kinase (241 aa).

Residues 10–13 (KLSG), Gly-53, and Arg-57 each bind ATP. Residues Asp-72 and 133-140 (AGSPYFST) contribute to the UMP site. The ATP site is built by Asn-161, Tyr-167, and Asp-170.

This sequence belongs to the UMP kinase family. Homohexamer.

The protein resides in the cytoplasm. It carries out the reaction UMP + ATP = UDP + ADP. Its pathway is pyrimidine metabolism; CTP biosynthesis via de novo pathway; UDP from UMP (UMPK route): step 1/1. Its activity is regulated as follows. Inhibited by UTP. In terms of biological role, catalyzes the reversible phosphorylation of UMP to UDP. The chain is Uridylate kinase from Aster yellows witches'-broom phytoplasma (strain AYWB).